A 215-amino-acid polypeptide reads, in one-letter code: MNLLIMGLPGAGKGTQAEFIVKNYGVNHISTGDMFRAAMKNETEMGKLAKSFIDKGELVPDEVTNGIVKERLAQDDIKASGFLLDGYPRTIDQAHALDTMLEELGIKLDAVVNIVVNPNILVDRLSGRYICRNCGATYHKIFNPTKVEGTCDVCGSHDLYQRADDVPETVKNRLDVNIKESAPIIEHYTELGLVKNIEGEQEISQVTDDIKKVLG.

Residue 10–15 (GAGKGT) coordinates ATP. The segment at 30–59 (STGDMFRAAMKNETEMGKLAKSFIDKGELV) is NMP. Residues Thr31, Arg36, 57–59 (ELV), 86–89 (GYPR), and Gln93 each bind AMP. An LID region spans residues 127–165 (GRYICRNCGATYHKIFNPTKVEGTCDVCGSHDLYQRADD). Arg128 is an ATP binding site. Zn(2+)-binding residues include Cys131 and Cys134. 137–138 (TY) serves as a coordination point for ATP. The Zn(2+) site is built by Cys151 and Cys154. Residues Arg162 and Arg173 each contribute to the AMP site. Position 201 (Gln201) interacts with ATP.

This sequence belongs to the adenylate kinase family. In terms of assembly, monomer.

It localises to the cytoplasm. The catalysed reaction is AMP + ATP = 2 ADP. It participates in purine metabolism; AMP biosynthesis via salvage pathway; AMP from ADP: step 1/1. In terms of biological role, catalyzes the reversible transfer of the terminal phosphate group between ATP and AMP. Plays an important role in cellular energy homeostasis and in adenine nucleotide metabolism. In Lactococcus lactis subsp. cremoris (strain SK11), this protein is Adenylate kinase.